The sequence spans 154 residues: UPF0178 protein Gbem_2221 (154 aa).

Belongs to the UPF0178 family.

This chain is UPF0178 protein Gbem_2221, found in Citrifermentans bemidjiense (strain ATCC BAA-1014 / DSM 16622 / JCM 12645 / Bem) (Geobacter bemidjiensis).